Reading from the N-terminus, the 152-residue chain is uncharacterized protein (152 aa).

Belongs to the antirestriction protein family.

This is an uncharacterized protein from Escherichia coli (strain K12).